Consider the following 548-residue polypeptide: MLIIIQSLLLATTASLCIADTPVPTQIRLVHDLLDNYDKKAKPMWDNSKPINVSFSMDLYQILELNEPQQYILLNAWIIERWFDEFLYWNPDDYENITELRLPYDSIWLPDTTLYNSLVMKDDDTRRLLNSKLTTDTHRRAALIELLYPTIYKFSCLLDLRFFPFDVQVCTMTFSSWTYDQKGIDYFPYSDKIGTSNYLENEGWYILQTKIKRQEVKYACCPNNYTLLQLTLYLRRKPLFYLVNLIIPTSIITLIAIVGFFTTSSASGMREEKVSLGITTLLSMSILMLMVSDQMPTTSTFIPLIGWFILAMIIVISLGTVVSSVIIAIQKRGSLGERMSKRALKFAKVLAWFTCTSLPPHVEKEHMMEAFDAPTPLVEVRPLQLASVKESVRNKWVSGARRATQRGNSGLALISDKSTDPLIHLSPTAHQPDESISPSAPPVPSSSPLPPPLTPGPADDVVSVASELSSKFLTSRMRPKSQKDNTFAAMQSSIKANRQLAVAEFEWFATVVERTCFVIFVVAFLIITFGINFIGFIHWHQAGVEYGG.

The N-terminal stretch at Met1 to Ala19 is a signal peptide. Over Thr21–Leu239 the chain is Extracellular. 3 N-linked (GlcNAc...) asparagine glycosylation sites follow: Asn52, Asn96, and Asn224. 3 helical membrane-spanning segments follow: residues Phe240–Phe260, Val274–Gln294, and Phe301–Val321. A disordered region spans residues Leu422–Asp460. The segment covering Ser439 to Pro455 has biased composition (pro residues). A helical membrane pass occupies residues Phe517 to Ile537. Topologically, residues His538–Gly548 are cytoplasmic.

Belongs to the ligand-gated ion channel (TC 1.A.9) family. Acetylcholine receptor (TC 1.A.9.1) subfamily. In terms of assembly, the functional receptor is a heteromer of deg-3 and des-2. Interacts with ric-3; which is required for proper receptor folding.

It localises to the cell membrane. Functionally, subunit of the non-synaptic neuronal acetylcholine receptor (AChR), which may play a role in chemotaxis towards choline. After binding choline or acetylcholine, the AChR responds by an extensive change in conformation that affects all subunits and leads to opening of an ion-conducting channel across the plasma membrane. This is Acetylcholine receptor subunit alpha-type des-2 (des-2) from Caenorhabditis elegans.